The following is a 753-amino-acid chain: 5-methyltetrahydropteroyltriglutamate--homocysteine methyltransferase (753 aa).

5-methyltetrahydropteroyltri-L-glutamate-binding positions include 17–20 (RELK) and Lys-117. Residues 431–433 (IGS) and Glu-484 contribute to the L-homocysteine site. Residues 431-433 (IGS) and Glu-484 each bind L-methionine. Residues 515-516 (RC) and Trp-561 each bind 5-methyltetrahydropteroyltri-L-glutamate. Residue Asp-599 participates in L-homocysteine binding. Asp-599 contacts L-methionine. Residue Glu-605 coordinates 5-methyltetrahydropteroyltri-L-glutamate. The Zn(2+) site is built by His-641, Cys-643, and Glu-665. His-694 acts as the Proton donor in catalysis. A Zn(2+)-binding site is contributed by Cys-726.

Belongs to the vitamin-B12 independent methionine synthase family. Zn(2+) is required as a cofactor.

It catalyses the reaction 5-methyltetrahydropteroyltri-L-glutamate + L-homocysteine = tetrahydropteroyltri-L-glutamate + L-methionine. It functions in the pathway amino-acid biosynthesis; L-methionine biosynthesis via de novo pathway; L-methionine from L-homocysteine (MetE route): step 1/1. Functionally, catalyzes the transfer of a methyl group from 5-methyltetrahydrofolate to homocysteine resulting in methionine formation. This is 5-methyltetrahydropteroyltriglutamate--homocysteine methyltransferase from Escherichia coli (strain UTI89 / UPEC).